A 292-amino-acid polypeptide reads, in one-letter code: Diaminopimelate epimerase (292 aa).

Residues N14 and N78 each coordinate substrate. C87 serves as the catalytic Proton donor. Residues 88–89 (GN), N164, N197, and 221–222 (ER) contribute to the substrate site. C230 (proton acceptor) is an active-site residue. Substrate is bound at residue 231–232 (GT).

This sequence belongs to the diaminopimelate epimerase family. In terms of assembly, homodimer.

It localises to the cytoplasm. The catalysed reaction is (2S,6S)-2,6-diaminopimelate = meso-2,6-diaminopimelate. The protein operates within amino-acid biosynthesis; L-lysine biosynthesis via DAP pathway; DL-2,6-diaminopimelate from LL-2,6-diaminopimelate: step 1/1. Its function is as follows. Catalyzes the stereoinversion of LL-2,6-diaminopimelate (L,L-DAP) to meso-diaminopimelate (meso-DAP), a precursor of L-lysine and an essential component of the bacterial peptidoglycan. The protein is Diaminopimelate epimerase of Leifsonia xyli subsp. xyli (strain CTCB07).